The chain runs to 352 residues: Protein RecA (352 aa).

Residue 64–71 (GPESSGKT) coordinates ATP. The segment at 328–352 (NPSSVPEAEAEHDPEQDEEPTFDLE) is disordered. Positions 335–352 (AEAEHDPEQDEEPTFDLE) are enriched in acidic residues.

The protein belongs to the RecA family.

Its subcellular location is the cytoplasm. Can catalyze the hydrolysis of ATP in the presence of single-stranded DNA, the ATP-dependent uptake of single-stranded DNA by duplex DNA, and the ATP-dependent hybridization of homologous single-stranded DNAs. It interacts with LexA causing its activation and leading to its autocatalytic cleavage. The chain is Protein RecA from Brevibacillus brevis (strain 47 / JCM 6285 / NBRC 100599).